A 388-amino-acid chain; its full sequence is Succinyl-diaminopimelate desuccinylase (388 aa).

H75 contributes to the Zn(2+) binding site. D77 is a catalytic residue. D108 is a binding site for Zn(2+). E142 serves as the catalytic Proton acceptor. E143, E171, and H361 together coordinate Zn(2+).

This sequence belongs to the peptidase M20A family. DapE subfamily. In terms of assembly, homodimer. It depends on Zn(2+) as a cofactor. Co(2+) is required as a cofactor.

The catalysed reaction is N-succinyl-(2S,6S)-2,6-diaminopimelate + H2O = (2S,6S)-2,6-diaminopimelate + succinate. Its pathway is amino-acid biosynthesis; L-lysine biosynthesis via DAP pathway; LL-2,6-diaminopimelate from (S)-tetrahydrodipicolinate (succinylase route): step 3/3. Functionally, catalyzes the hydrolysis of N-succinyl-L,L-diaminopimelic acid (SDAP), forming succinate and LL-2,6-diaminopimelate (DAP), an intermediate involved in the bacterial biosynthesis of lysine and meso-diaminopimelic acid, an essential component of bacterial cell walls. This Methylocella silvestris (strain DSM 15510 / CIP 108128 / LMG 27833 / NCIMB 13906 / BL2) protein is Succinyl-diaminopimelate desuccinylase.